The chain runs to 698 residues: PWWP domain-containing DNA repair factor 3A (698 aa).

Disordered stretches follow at residues 102–145 (TSLS…EDDQ) and 159–386 (CSPK…EEPP). The residue at position 105 (Ser105) is a Phosphoserine. Polar residues predominate over residues 129–139 (SQVSSAPSPSF). Phosphoserine is present on residues Ser165, Ser168, and Ser170. The span at 200 to 211 (DESQNGSGSQLD) shows a compositional bias: polar residues. 2 stretches are compositionally biased toward basic and acidic residues: residues 212-235 (HGQE…RGKA) and 341-350 (RAGDSDRPEE). Ser355 and Ser356 each carry phosphoserine. The segment covering 370–384 (EEEEEEEEEEEEEEE) has biased composition (acidic residues). The PWWP domain maps to 399 to 460 (VGMLVWLKYQ…KHFDCKEKHA (62 aa)).

It belongs to the PWWP3A family. Interacts with TP53BP1 (via BRCT domain); the interaction is not dependent on its phosphorylation status. Binds nucleosomes. Interacts with trimethylated 'Lys-36' of histone H3 (H3K36me3) (in vitro).

It is found in the nucleus. In terms of biological role, involved in the DNA damage response pathway by contributing to the maintenance of chromatin architecture. Recruited to the vicinity of DNA breaks by TP53BP1 and plays an accessory role to facilitate damage-induced chromatin changes and promoting chromatin relaxation. Required for efficient DNA repair and cell survival following DNA damage. This is PWWP domain-containing DNA repair factor 3A from Rattus norvegicus (Rat).